Reading from the N-terminus, the 555-residue chain is MFS-type transporter VdtG (555 aa).

Residues 1–20 (MNGNGTADKPGPPGGKPFGP) are disordered. N-linked (GlcNAc...) asparagine glycosylation occurs at N4. Transmembrane regions (helical) follow at residues 30–50 (TGFK…LTAL), 71–91 (DIGW…LLFG), and 101–121 (WVFL…GAAP). N-linked (GlcNAc...) asparagine glycosylation is present at N122. Transmembrane regions (helical) follow at residues 132–152 (IAGL…FFTV) and 162–182 (GIAG…GGGF). N185 is a glycosylation site (N-linked (GlcNAc...) asparagine). The next 4 helical transmembrane spans lie at 190 to 210 (WCFY…LLFL), 232 to 252 (LGNL…QWGG), 262 to 282 (IVAL…VQLW), and 304 to 324 (AFTI…PIWF). An N-linked (GlcNAc...) asparagine glycan is attached at N329. Transmembrane regions (helical) follow at residues 337–357 (VMML…GFII), 364–384 (TPFM…LTTF), 393–413 (WIGY…QASL), 425–445 (PIGI…FLAV), and 497–517 (LMDV…AAAF). A disordered region spans residues 528–555 (AAGPGGPGGPGGPGGPGGPEGLRGGNKV). The span at 530 to 555 (GPGGPGGPGGPGGPGGPEGLRGGNKV) shows a compositional bias: gly residues.

It belongs to the major facilitator superfamily. TCR/Tet family.

It localises to the endoplasmic reticulum membrane. Its function is as follows. MFS-type transporter; part of the gene cluster that mediates the biosynthesis of viriditoxin, one of the 'classical' secondary metabolites produced by fungi and that has antibacterial activity. Is not essential for viriditoxin production. The polypeptide is MFS-type transporter VdtG (Byssochlamys spectabilis (Paecilomyces variotii)).